Here is a 150-residue protein sequence, read N- to C-terminus: MTNSFQNSRRDLRERAFQALFNIEMGAELLAASQFAYGYDKVTGEDAQVLELPIFLLSLVTGVNNHKEELDNLISTHLKKGWSLERLTLTDKTLLRLGLFEIKYFDETPDRVALNEIIEVAKKYSDETSAKFINGLLSQYVSEAPSANKS.

It belongs to the NusB family.

Its function is as follows. Involved in transcription antitermination. Required for transcription of ribosomal RNA (rRNA) genes. Binds specifically to the boxA antiterminator sequence of the ribosomal RNA (rrn) operons. This chain is Transcription antitermination protein NusB, found in Streptococcus pyogenes serotype M3 (strain ATCC BAA-595 / MGAS315).